The sequence spans 103 residues: MSHTILLLQPTDNIESRSWSDYENTTECLEGICRVYEEYLKKKVPAQNEITYDISHLFEFIDDLKDLSMLVLDNTTYTYVPHNKQYVKESIYKLMNNRLNNQH.

It belongs to the E(R) family. Homodimer.

Its function is as follows. May have a role in the cell cycle. The sequence is that of Enhancer of rudimentary homolog from Caenorhabditis elegans.